We begin with the raw amino-acid sequence, 332 residues long: Protein pelota homolog (332 aa).

This sequence belongs to the eukaryotic release factor 1 family. Pelota subfamily. Monomer. Requires a divalent metal cation as cofactor.

The protein resides in the cytoplasm. In terms of biological role, may function in recognizing stalled ribosomes, interact with stem-loop structures in stalled mRNA molecules, and effect endonucleolytic cleavage of the mRNA. May play a role in the release non-functional ribosomes and degradation of damaged mRNAs. Has endoribonuclease activity. This is Protein pelota homolog from Pyrobaculum calidifontis (strain DSM 21063 / JCM 11548 / VA1).